Here is a 289-residue protein sequence, read N- to C-terminus: Diaminopimelate epimerase (289 aa).

Substrate contacts are provided by N13, Q47, and N67. The active-site Proton donor is the C76. Substrate-binding positions include G77–N78, N167, N200, and E218–R219. The active-site Proton acceptor is C227. G228–T229 provides a ligand contact to substrate.

This sequence belongs to the diaminopimelate epimerase family. In terms of assembly, homodimer.

The protein localises to the cytoplasm. It catalyses the reaction (2S,6S)-2,6-diaminopimelate = meso-2,6-diaminopimelate. Its pathway is amino-acid biosynthesis; L-lysine biosynthesis via DAP pathway; DL-2,6-diaminopimelate from LL-2,6-diaminopimelate: step 1/1. In terms of biological role, catalyzes the stereoinversion of LL-2,6-diaminopimelate (L,L-DAP) to meso-diaminopimelate (meso-DAP), a precursor of L-lysine and an essential component of the bacterial peptidoglycan. The protein is Diaminopimelate epimerase of Burkholderia vietnamiensis (strain G4 / LMG 22486) (Burkholderia cepacia (strain R1808)).